Reading from the N-terminus, the 394-residue chain is Guanine nucleotide-binding protein G(s) subunit alpha (394 aa).

Residues 1–23 (MGCLGNSKTEDQRNEEKAQREAN) are disordered. Gly-2 carries the N-palmitoyl glycine lipid modification. Residue Cys-3 is the site of S-palmitoyl cysteine attachment. Positions 8 to 23 (KTEDQRNEEKAQREAN) are enriched in basic and acidic residues. One can recognise a G-alpha domain in the interval 39 to 394 (ATHRLLLLGA…RMHLRQYELL (356 aa)). A G1 motif region spans residues 42–55 (RLLLLGAGESGKST). 47–55 (GAGESGKST) contributes to the GTP binding site. Ser-54 is a Mg(2+) binding site. The tract at residues 68–90 (FNGEGGEEDPQAARSNSDGEKAT) is disordered. The interval 196–204 (DLLRCRVLT) is G2 motif. GTP-binding positions include 197–204 (LLRCRVLT), 223–227 (DVGGQ), 292–295 (NKQD), and Ala-366. Thr-204 serves as a coordination point for Mg(2+). The segment at 219-228 (FHMFDVGGQR) is G3 motif. The tract at residues 288–295 (ILFLNKQD) is G4 motif. The segment at 364 to 369 (TCAVDT) is G5 motif.

It belongs to the G-alpha family. G(s) subfamily. Heterotrimeric G proteins are composed of 3 units; alpha, beta and gamma. The alpha chain contains the guanine nucleotide binding site. Interacts with CRY1; the interaction may block GPCR-mediated regulation of cAMP concentrations. Interacts with ADCY6 and stimulates its adenylyl cyclase activity. Interacts with ADCY2 and ADCY5. Stimulates the ADCY5 adenylyl cyclase activity. Interaction with SASH1.

The protein localises to the cell membrane. Guanine nucleotide-binding proteins (G proteins) function as transducers in numerous signaling pathways controlled by G protein-coupled receptors (GPCRs). Signaling involves the activation of adenylyl cyclases, resulting in increased levels of the signaling molecule cAMP. GNAS functions downstream of several GPCRs, including beta-adrenergic receptors. Stimulates the Ras signaling pathway via RAPGEF2. The polypeptide is Guanine nucleotide-binding protein G(s) subunit alpha (GNAS) (Cricetulus griseus (Chinese hamster)).